A 198-amino-acid polypeptide reads, in one-letter code: Small ribosomal subunit protein uS7 (198 aa).

It belongs to the universal ribosomal protein uS7 family. As to quaternary structure, part of the 30S ribosomal subunit.

In terms of biological role, one of the primary rRNA binding proteins, it binds directly to 16S rRNA where it nucleates assembly of the head domain of the 30S subunit. Is located at the subunit interface close to the decoding center. The sequence is that of Small ribosomal subunit protein uS7 from Desulfurococcus mucosus (Desulfurococcus mobilis).